A 451-amino-acid chain; its full sequence is MTRVAIIGAGPSGLAQLRAFQSAGKKGAAIPELVCFEKQSDWGGLWNYTWRTGVDEYGEPVHGSMYRYLWSNGPKECLEFADYSFEEHFGRPIPSYPPRAVLHDYIMGRVEKSDVRKFVRFSTVVRWIDFDETTQLFTVTVKDLKKDELYSETFDYVVVASGHFSTPNVPHFPGIEVFPGRVLHAHDFRDANEFVGKNLLVVGSSYSAEDIASQCYKYGAKSITFSYRSKPLNFDWPECFTVKPLLTKLTGKTAHFKDGSEAVVDAVLLCTGYLHHFPFLADNLRLKTNNRLYPAGLYKGIFWQDNPKLIYLGMQDQYFTFNMFDAQAWYARDVILGRIKLPAAEERQADIDHWRGLEEKLETAFDGIDFQTEYMRDLIPATDYPMFDLDKVAALFKEWEEDKVKSIMGYRDNSYVSIMTGNKAPPHHTKWMEALDDSFDAFQNRPEAAAE.

The FAD site is built by S12, E37, Q39, L45, W46, and H62. W70 and N72 together coordinate NADP(+). Residues N72 and V125 each contribute to the FAD site. NADP(+) is bound by residues S204, S205, S207, and R228. The FAD site is built by Q317 and T320. R411 contributes to the NADP(+) binding site.

This sequence belongs to the FMO family. It depends on FAD as a cofactor.

It catalyses the reaction trimethylamine + NADPH + O2 = trimethylamine N-oxide + NADP(+) + H2O. Its function is as follows. Catalyzes the oxidation of trimethylamine (TMA) to produce trimethylamine N-oxide (TMAO). In vitro, has a broad substrate specificity, oxidizing many nitrogen- and sulfur-containing compounds, including dimethylamine (DMA), dimethylsulfide (DMS), dimethylsulfoxide (DMSO), cysteamine, methimazole and dimethylaniline. This Methylocella silvestris (strain DSM 15510 / CIP 108128 / LMG 27833 / NCIMB 13906 / BL2) protein is Trimethylamine monooxygenase.